The following is a 178-amino-acid chain: Putative metal-dependent hydrolase GK0616 (178 aa).

The Zn(2+) site is built by His-68, His-161, and His-165.

This sequence belongs to the metal hydrolase YfiT family. As to quaternary structure, homodimer. Zn(2+) serves as cofactor.

The protein resides in the cytoplasm. In terms of biological role, possible metal-dependent hydrolase. This chain is Putative metal-dependent hydrolase GK0616, found in Geobacillus kaustophilus (strain HTA426).